The following is a 124-amino-acid chain: Small ribosomal subunit protein uS12 (124 aa).

The residue at position 89 (aspartate 89) is a 3-methylthioaspartic acid.

This sequence belongs to the universal ribosomal protein uS12 family. As to quaternary structure, part of the 30S ribosomal subunit. Contacts proteins S8 and S17. May interact with IF1 in the 30S initiation complex.

In terms of biological role, with S4 and S5 plays an important role in translational accuracy. Interacts with and stabilizes bases of the 16S rRNA that are involved in tRNA selection in the A site and with the mRNA backbone. Located at the interface of the 30S and 50S subunits, it traverses the body of the 30S subunit contacting proteins on the other side and probably holding the rRNA structure together. The combined cluster of proteins S8, S12 and S17 appears to hold together the shoulder and platform of the 30S subunit. The polypeptide is Small ribosomal subunit protein uS12 (Psychrobacter sp. (strain PRwf-1)).